Reading from the N-terminus, the 763-residue chain is Xaa-Pro dipeptidyl-peptidase (763 aa).

Active-site charge relay system residues include S348, D468, and H498.

This sequence belongs to the peptidase S15 family. Homodimer.

The protein resides in the cytoplasm. The enzyme catalyses Hydrolyzes Xaa-Pro-|- bonds to release unblocked, N-terminal dipeptides from substrates including Ala-Pro-|-p-nitroanilide and (sequentially) Tyr-Pro-|-Phe-Pro-|-Gly-Pro-|-Ile.. In terms of biological role, removes N-terminal dipeptides sequentially from polypeptides having unsubstituted N-termini provided that the penultimate residue is proline. The sequence is that of Xaa-Pro dipeptidyl-peptidase (pepX) from Lactococcus lactis subsp. lactis (strain IL1403) (Streptococcus lactis).